Consider the following 2515-residue polypeptide: Nonribosomal peptide synthetase tpzA (2515 aa).

The tract at residues Glu246–Arg648 is adenylation 1. Residues Ser794–Ser867 enclose the Carrier 1 domain. O-(pantetheine 4'-phosphoryl)serine is present on Ser828. A condensation 1 region spans residues Asp924 to Glu1332. The interval Arg1357–Arg1758 is adenylation 2. A Carrier 2 domain is found at Leu1900 to Lys1976. Position 1937 is an O-(pantetheine 4'-phosphoryl)serine (Ser1937). Positions Val2013–Lys2431 are condensation 2. The region spanning Pro2436–Ser2512 is the Carrier 3 domain. Residue Ser2473 is modified to O-(pantetheine 4'-phosphoryl)serine.

The protein belongs to the NRP synthetase family.

The protein operates within secondary metabolite biosynthesis. In terms of biological role, nonribosomal peptide synthetase; part of the gene cluster that mediates the biosynthesis of terreazepine,. The first step of terreazepine biosynthesis is catalyzed by the indoleamine 2,3-dioxygenase tpzB which produces N-formyl-kynurenine through the catabolism of tryptophan. The two-module NRPS tpzA then utilizes anthranilate and kynurenine to assemble terreazepine. The first adenylation domain of tpzA (A1) loads anthranilate onto the T1 domain, while A2 loads kynurenine, generated through spontaneous nonenzymatic deformylation of the tzpB-supplied N-formyl-kynurenine. TpzA produces a 2:1 mixture of S-R enantiomers, which suggests that the A2 domain accepts both D- and L-kynurenine. The peptide bond formation between the tethered amino acids is catalyzed by the first condensation domain (C1) between anthranilate's carbonyl carbon and kynurenine's aliphatic primary amine. The second C domain (C2) catalyzes the final cyclization event between the aromatic amine of kynurenine and the tethered carbonyl carbon, yielding the final terreazepine product. The T3 domain may facilitate the interaction with downstream tailoring enzymes. This is Nonribosomal peptide synthetase tpzA from Aspergillus terreus (strain NIH 2624 / FGSC A1156).